Reading from the N-terminus, the 98-residue chain is NADH-ubiquinone oxidoreductase chain 4L (98 aa).

Transmembrane regions (helical) follow at residues 1-21, 29-49, and 61-81; these read MSMV…GLLM, SLLC…ITIM, and IILL…LVMI.

It belongs to the complex I subunit 4L family. In terms of assembly, core subunit of respiratory chain NADH dehydrogenase (Complex I) which is composed of 45 different subunits.

The protein localises to the mitochondrion inner membrane. It carries out the reaction a ubiquinone + NADH + 5 H(+)(in) = a ubiquinol + NAD(+) + 4 H(+)(out). Core subunit of the mitochondrial membrane respiratory chain NADH dehydrogenase (Complex I) which catalyzes electron transfer from NADH through the respiratory chain, using ubiquinone as an electron acceptor. Part of the enzyme membrane arm which is embedded in the lipid bilayer and involved in proton translocation. This is NADH-ubiquinone oxidoreductase chain 4L (MT-ND4L) from Procyon lotor (Raccoon).